A 473-amino-acid chain; its full sequence is Glutamate-1-semialdehyde 2,1-aminomutase, chloroplastic (473 aa).

The N-terminal 37 residues, 1–37 (MSATLTGSGTALGFSCSSKISKRVSSSPSTRCSIKMS), are a transit peptide targeting the chloroplast. Lys313 carries the post-translational modification N6-(pyridoxal phosphate)lysine.

This sequence belongs to the class-III pyridoxal-phosphate-dependent aminotransferase family. HemL subfamily. In terms of assembly, homodimer. Pyridoxal 5'-phosphate serves as cofactor.

The protein resides in the plastid. It localises to the chloroplast. It catalyses the reaction (S)-4-amino-5-oxopentanoate = 5-aminolevulinate. It participates in porphyrin-containing compound metabolism; protoporphyrin-IX biosynthesis; 5-aminolevulinate from L-glutamyl-tRNA(Glu): step 2/2. Its pathway is porphyrin-containing compound metabolism; chlorophyll biosynthesis. This chain is Glutamate-1-semialdehyde 2,1-aminomutase, chloroplastic (GSA), found in Brassica napus (Rape).